Consider the following 405-residue polypeptide: MASASSPEGASSSSPEKVKMVTVLSIDGGGVRGIIPATILAFLEKELQKLDGPDARIADYFDVVAGTSTGGLLTAMLTAPNENNRPLFAADELAKFYIEHSPSIFPQKNWVLSKIAGTLRMVSGPKYDGKYLHSLLREKLGDTRLDKALTNVVIPTFDIANLQPTIFSKFELKYKPLKNALLSDISISTSAAPTFFPAHYFETKDDNGQTREFNLVDGGVAANNPTLCAMSQVSKYIILEDKEDCDFFPVKPTEYGKFMVISIGCGSNHDQKYKAKDAAKWGIFNWLIKGSSAPIIDMFTSASADMVDIHLGVLFSALQCEKNYLRIQYDQLTGSAGSIDDCSKENMDNLVKIGEMLLDKNVSRVDLETGHYVDVAGEGTNRDQLAKFAKQLSDERRRRQNEPSN.

Positions L24–M230 constitute a PNPLA domain. The short motif at G28–G33 is the GXGXXG element. The GXSXG signature appears at G66–G70. Residue S68 is the Nucleophile of the active site. The active-site Proton acceptor is D217. The short motif at D217–G219 is the DGA/G element.

This sequence belongs to the patatin family.

Functionally, possesses non-specific lipolytic acyl hydrolase (LAH) activity. Hydrolyzes phospholipids as well as galactolipids. May play a role in disease resistance. This chain is Patatin-like protein 2 (PLP2), found in Oryza sativa subsp. indica (Rice).